The chain runs to 255 residues: MAATHLTSTSSLTINTLPSFEGLRSASGISKINVSVAYPSFTSRSFRGLVVRAASITTSKYTSVKPLGDRVLIKTKIVEEKTTSGIFLPTAAQKKPQSGEVVAIGSGKKVGDKKLPVAVKTGAEVVYSKYTGTEIEVDGSSHLIVKEDDIIGILETDDVKDLKPLNDRLLIKVAEVENKTSGGLLLAESSKEKPSFGTVVATGPGVLDEEGNRIPLPVCSGNTVLYSKYAGNDFKGVDGSDYMVLRVSDVMAVLS.

A chloroplast-targeting transit peptide spans 1–53 (MAATHLTSTSSLTINTLPSFEGLRSASGISKINVSVAYPSFTSRSFRGLVVRA). 2 cpn-10 domain regions span residues 54-156 (ASIT…ILET) and 157-255 (DDVK…AVLS).

It belongs to the GroES chaperonin family. Forms stable complexes with CPN60 in the presence of ATP.

The protein resides in the plastid. The protein localises to the chloroplast. Its function is as follows. Seems to function only as a co-chaperone, along with cpn60, and in certain cases is essential for the discharge of biologically active proteins from cpn60. In Spinacia oleracea (Spinach), this protein is 20 kDa chaperonin, chloroplastic (CPN21).